A 62-amino-acid polypeptide reads, in one-letter code: Cecropin-D (62 aa).

Residues 1–22 (MNFTKILFFVVACVFAMRTVSA) form the signal peptide. Residues 23-24 (AP) constitute a propeptide, removed by a dipeptidylpeptidase. Lysine 60 carries the lysine amide modification.

The protein belongs to the cecropin family.

It is found in the secreted. Its function is as follows. Cecropins have lytic and antibacterial activity against several Gram-positive and Gram-negative bacteria. This is Cecropin-D from Hyalophora cecropia (Cecropia moth).